Reading from the N-terminus, the 166-residue chain is Regulatory protein RecX (166 aa).

It belongs to the RecX family.

It localises to the cytoplasm. Its function is as follows. Modulates RecA activity. This Escherichia coli (strain SE11) protein is Regulatory protein RecX.